The sequence spans 878 residues: Aminopeptidase M1-A (878 aa).

Residues 105–212 (VGEGTLVIAF…MSTYLVAVIV (108 aa)) form a required for membrane association region. Residues E145 and 278–282 (GAMEN) contribute to the substrate site. Zn(2+) is bound at residue H314. E315 functions as the Proton acceptor in the catalytic mechanism. 2 residues coordinate Zn(2+): H318 and E337. Positions 727–728 (LL) match the Dileucine internalization motif motif.

This sequence belongs to the peptidase M1 family. As to quaternary structure, homodimer. Requires Zn(2+) as cofactor.

It is found in the membrane. The protein resides in the microsome membrane. Its subcellular location is the cytoplasm. The enzyme catalyses Release of an N-terminal amino acid, Xaa-|-Yaa- from a peptide, amide or arylamide. Xaa is preferably Ala, but may be most amino acids including Pro (slow action). When a terminal hydrophobic residue is followed by a prolyl residue, the two may be released as an intact Xaa-Pro dipeptide.. The chain is Aminopeptidase M1-A from Oryza sativa subsp. japonica (Rice).